A 906-amino-acid chain; its full sequence is Transmembrane channel-like protein 2 (906 aa).

A disordered region spans residues 1–150 (MSHQVKGLKE…SASGGESLSE (150 aa)). The Cytoplasmic portion of the chain corresponds to 1–263 (MSHQVKGLKE…IFLRWMYGVN (263 aa)). Residues 69 to 79 (PRRKQTGRRRH) are compositionally biased toward basic residues. The segment covering 80 to 127 (REELGEQERGEAERTCEGRRKRDERASFQERTAAPKREKEIPRREEKS) has biased composition (basic and acidic residues). Low complexity predominate over residues 135–147 (SSSLASSASGGES). Residues 264-284 (LVLFGLIFGLVIIPEVLMGMP) traverse the membrane as a helical segment. Residues 285–336 (YGSIPRKTVPRAEEEKAMDFSVLWDFEGYIKYSALFYGYYNNQRTIGWLRYR) are Extracellular-facing. Residues 337 to 357 (LPMAYFMVGVSVFGYSLIIVI) traverse the membrane as a helical segment. At 358 to 431 (RSMASNTQGS…NIHLTRFLRV (74 aa)) the chain is on the cytoplasmic side. Residues 432–452 (LANFLIICCLCGSGYLIYFVV) traverse the membrane as a helical segment. Topologically, residues 453-508 (KRSQQFSKMQNVSWYERNEVEIVMSLLGMFCPPLFETIAALENYHPRTGLKWQLGR) are extracellular. Residues 509–529 (IFALFLGNLYTFLLALMDDVH) traverse the membrane as a helical segment. Over 530–693 (LKLANEETIK…RVFKASRSNN (164 aa)) the chain is Cytoplasmic. The chain crosses the membrane as a helical span at residues 694 to 714 (FYMGLLLLVLFLSLLPVAYTI). Residues 715 to 750 (MSLPPSFDCGPFSGKNRMYDVLQETIENDFPTFLGK) are Extracellular-facing. Residues 751–771 (IFAFLANPGLIIPAILLMFLA) form a helical membrane-spanning segment. The Cytoplasmic segment spans residues 772–906 (IYYLNSVSKS…SGKSAQRPPH (135 aa)). The segment at 800 to 906 (EKSHKSVKGK…SGKSAQRPPH (107 aa)) is disordered. Composition is skewed to polar residues over residues 820-846 (KSSS…QSQA), 854-866 (PGTS…TTLP), and 886-900 (APSQ…SGKS).

This sequence belongs to the TMC family. In terms of assembly, forms the MET channel composed of TMC dimer (TMC1 or TMC2), TMIE, TOMT, CIB (CIB2 or CIB3), LHFPL5 and PDH15. The interaction of TMC1 and TMC2 with TOMT is required for the transportation of TMC1/2 into the stereocilia of hair cells. Interacts (via N-terminus) with both isoforms CD1 and CD3 of PCDH15. Can form a heterodimer with TMC1, TMC5 or TMC7. In terms of tissue distribution, detected in fetal cochlea.

It is found in the cell membrane. It carries out the reaction Ca(2+)(in) = Ca(2+)(out). Its function is as follows. Pore-forming subunit of the mechanotransducer (MET) non-selective cation channel complex located at the tips of stereocilia of cochlear hair cells and that mediates sensory transduction in the auditory system. The MET complex is composed of two dimeric pore-forming ion-conducting transmembrane TMC (TMC1 or TMC2) subunits, and aided by several auxiliary proteins including LHFPL5, TMIE, CIB2/3 and TOMT, and the tip-link PCDH15. MET channel is activated by tension in the tip-link extending from the side wall of one stereocilium to the tip of the adjacent shorter stereocilium, where the channel is located. TMC2 MET channel is highly permeable to calcium and likely transports monovalent cations. Also involved in vestibular hair cell transduction current of the mammalian inner ear. The polypeptide is Transmembrane channel-like protein 2 (Homo sapiens (Human)).